A 279-amino-acid chain; its full sequence is Energy-coupling factor transporter ATP-binding protein EcfA1 (279 aa).

Residues 6–240 (LSIEGVSFRY…GSKLERIGLD (235 aa)) enclose the ABC transporter domain. 40–47 (GHNGSGKS) serves as a coordination point for ATP.

The protein belongs to the ABC transporter superfamily. Energy-coupling factor EcfA family. As to quaternary structure, forms a stable energy-coupling factor (ECF) transporter complex composed of 2 membrane-embedded substrate-binding proteins (S component), 2 ATP-binding proteins (A component) and 2 transmembrane proteins (T component).

The protein resides in the cell membrane. In terms of biological role, ATP-binding (A) component of a common energy-coupling factor (ECF) ABC-transporter complex. Unlike classic ABC transporters this ECF transporter provides the energy necessary to transport a number of different substrates. This is Energy-coupling factor transporter ATP-binding protein EcfA1 from Geobacillus kaustophilus (strain HTA426).